Consider the following 109-residue polypeptide: Lipoprotein BsmA (109 aa).

Positions 1–24 (MVSRKRNSVIYRFASLLLVLMLSA) are cleaved as a signal peptide. Cys25 is lipidated: N-palmitoyl cysteine. Cys25 carries S-diacylglycerol cysteine lipidation.

The protein belongs to the BhsA/McbA family.

Its subcellular location is the cell membrane. Involved in protection of biofilms against oxidative stress. The polypeptide is Lipoprotein BsmA (bsmA) (Escherichia coli (strain K12)).